Here is a 310-residue protein sequence, read N- to C-terminus: Ribosomal RNA small subunit methyltransferase H (310 aa).

S-adenosyl-L-methionine contacts are provided by residues 33-35, aspartate 53, phenylalanine 79, aspartate 100, and glutamine 107; that span reads AGH.

Belongs to the methyltransferase superfamily. RsmH family.

It localises to the cytoplasm. It carries out the reaction cytidine(1402) in 16S rRNA + S-adenosyl-L-methionine = N(4)-methylcytidine(1402) in 16S rRNA + S-adenosyl-L-homocysteine + H(+). Specifically methylates the N4 position of cytidine in position 1402 (C1402) of 16S rRNA. The polypeptide is Ribosomal RNA small subunit methyltransferase H (Clostridium tetani (strain Massachusetts / E88)).